A 484-amino-acid polypeptide reads, in one-letter code: Nuclear rim protein 1 (484 aa).

Residue Ser3 is modified to Phosphoserine. 2 helical membrane-spanning segments follow: residues Phe145–Tyr165 and Thr252–Phe272. Positions Ser416–Ser458 are disordered. Ser417 is subject to Phosphoserine. Residues Asn430–Leu440 show a composition bias toward polar residues. Residue Ser474 is modified to Phosphoserine.

The protein belongs to the NUR1 family. Interacts with CSM1.

The protein localises to the nucleus membrane. In terms of biological role, member of a perinuclear network that controls recombination at multiple loci to maintain genome stability. Required for rDNA repeat stability. This is Nuclear rim protein 1 (NUR1) from Saccharomyces cerevisiae (strain YJM789) (Baker's yeast).